The primary structure comprises 94 residues: C-C motif chemokine 17 (94 aa).

Residues 1 to 23 (MAPLKMLALVILLLGASLQHIHA) form the signal peptide. 2 cysteine pairs are disulfide-bonded: C33–C57 and C34–C73.

It belongs to the intercrine beta (chemokine CC) family.

Its subcellular location is the secreted. Chemokine, which displays chemotactic activity for T lymphocytes, preferentially Th2 cells, but not monocytes or granulocytes. Therefore plays an important role in a wide range of inflammatory and immunological processes. Acts by binding to CCR4 at T-cell surface. Mediates GM-CSF/CSF2-driven pain and inflammation. In the brain, required to maintain the typical, highly branched morphology of hippocampal microglia under homeostatic conditions. May be important for the appropriate adaptation of microglial morphology and synaptic plasticity to acute lipopolysaccharide (LPS)-induced neuroinflammation. Plays a role in wound healing, mainly by inducing fibroblast migration into the wound. This chain is C-C motif chemokine 17 (CCL17), found in Macaca mulatta (Rhesus macaque).